We begin with the raw amino-acid sequence, 170 residues long: Transcription factor E (170 aa).

The HTH TFE/IIEalpha-type domain occupies 1-93 (MKDVYLYIVE…TWYVDDEIIK (93 aa)).

It belongs to the TFE family. As to quaternary structure, monomer. Interaction with RNA polymerase subunits RpoF and RpoE is necessary for Tfe stimulatory transcription activity. Able to interact with Tbp and RNA polymerase in the absence of DNA promoter. Interacts both with the preinitiation and elongation complexes.

Its function is as follows. Transcription factor that plays a role in the activation of archaeal genes transcribed by RNA polymerase. Facilitates transcription initiation by enhancing TATA-box recognition by TATA-box-binding protein (Tbp), and transcription factor B (Tfb) and RNA polymerase recruitment. Not absolutely required for transcription in vitro, but particularly important in cases where Tbp or Tfb function is not optimal. It dynamically alters the nucleic acid-binding properties of RNA polymerases by stabilizing the initiation complex and destabilizing elongation complexes. Seems to translocate with the RNA polymerase following initiation and acts by binding to the non template strand of the transcription bubble in elongation complexes. This Pyrobaculum aerophilum (strain ATCC 51768 / DSM 7523 / JCM 9630 / CIP 104966 / NBRC 100827 / IM2) protein is Transcription factor E.